The following is a 304-amino-acid chain: Sulfate adenylyltransferase subunit 2 2 (304 aa).

Belongs to the PAPS reductase family. CysD subfamily. Heterodimer composed of CysD, the smaller subunit, and CysN.

The enzyme catalyses sulfate + ATP + H(+) = adenosine 5'-phosphosulfate + diphosphate. Its pathway is sulfur metabolism; hydrogen sulfide biosynthesis; sulfite from sulfate: step 1/3. In terms of biological role, with CysN forms the ATP sulfurylase (ATPS) that catalyzes the adenylation of sulfate producing adenosine 5'-phosphosulfate (APS) and diphosphate, the first enzymatic step in sulfur assimilation pathway. APS synthesis involves the formation of a high-energy phosphoric-sulfuric acid anhydride bond driven by GTP hydrolysis by CysN coupled to ATP hydrolysis by CysD. The sequence is that of Sulfate adenylyltransferase subunit 2 2 from Marinobacter nauticus (strain ATCC 700491 / DSM 11845 / VT8) (Marinobacter aquaeolei).